The following is a 143-amino-acid chain: Submaxillary gland androgen-regulated protein 2, isoform gamma (143 aa).

Residues 1–22 (MKALYMVFVLWVLIGCFLSSEC) form the signal peptide. Positions 28–50 (GQHDPTRPLSPSNPSSHFYPQPD) are disordered. Positions 36 to 45 (LSPSNPSSHF) are enriched in polar residues.

The protein resides in the secreted. May play a role in protection or detoxification. The sequence is that of Submaxillary gland androgen-regulated protein 2, isoform gamma (Smr2) from Mus musculus (Mouse).